We begin with the raw amino-acid sequence, 201 residues long: Anthranilate synthase component 2 (201 aa).

In terms of domain architecture, Glutamine amidotransferase type-1 spans 1–199 (MLLMIDNYDS…LRQQGGVRGE (199 aa)). 52-54 (GPC) provides a ligand contact to L-glutamine. The active-site Nucleophile; for GATase activity is Cys79. Residues Gln83 and 129-130 (SL) each bind L-glutamine. Catalysis depends on for GATase activity residues His173 and Glu175.

As to quaternary structure, heterotetramer consisting of two non-identical subunits: a beta subunit (TrpG) and a large alpha subunit (TrpE).

The enzyme catalyses chorismate + L-glutamine = anthranilate + pyruvate + L-glutamate + H(+). Its pathway is amino-acid biosynthesis; L-tryptophan biosynthesis; L-tryptophan from chorismate: step 1/5. Functionally, part of a heterotetrameric complex that catalyzes the two-step biosynthesis of anthranilate, an intermediate in the biosynthesis of L-tryptophan. In the first step, the glutamine-binding beta subunit (TrpG) of anthranilate synthase (AS) provides the glutamine amidotransferase activity which generates ammonia as a substrate that, along with chorismate, is used in the second step, catalyzed by the large alpha subunit of AS (TrpE) to produce anthranilate. In the absence of TrpG, TrpE can synthesize anthranilate directly from chorismate and high concentrations of ammonia. The chain is Anthranilate synthase component 2 from Pseudomonas aeruginosa (strain ATCC 15692 / DSM 22644 / CIP 104116 / JCM 14847 / LMG 12228 / 1C / PRS 101 / PAO1).